The sequence spans 1238 residues: Cullin-associated NEDD8-dissociated protein 1 (1238 aa).

HEAT repeat units follow at residues 41–78, 126–167, 171–208, 210–247, and 251–292; these read TYEN…RVKD, LVIK…KYGS, GDLE…PSPD, LFNS…SSGY, and KYLP…KCQK. Residues 315–354 form a disordered region; sequence YSDDGEGEEDGDEEEEEMETSGDNDEEQEEEEEEEDLSDD. HEAT repeat units follow at residues 382–419, 432–469, 603–641, 646–683, 688–725, 853–890, 933–966, 967–1004, and 1008–1045; these read ELYQ…QLNK, QQVP…IIPG, EIQS…SSIN, SILP…VCPN, SLLT…NYSE, HENE…CSLQ, PFLQ…KLSM, IEPN…ENKE, and QYLA…NKPN.

The protein belongs to the CAND family.

Its subcellular location is the nucleus. In terms of biological role, key assembly factor of SCF (SKP1-CUL1-F-box protein) E3 ubiquitin ligase complexes that promotes the exchange of the substrate-recognition F-box subunit in SCF complexes, thereby playing a key role in the cellular repertoire of SCF complexes. Acts as a F-box protein exchange factor. The polypeptide is Cullin-associated NEDD8-dissociated protein 1 (cand1) (Dictyostelium discoideum (Social amoeba)).